The sequence spans 178 residues: ATP synthase subunit delta (178 aa).

It belongs to the ATPase delta chain family. As to quaternary structure, F-type ATPases have 2 components, F(1) - the catalytic core - and F(0) - the membrane proton channel. F(1) has five subunits: alpha(3), beta(3), gamma(1), delta(1), epsilon(1). F(0) has three main subunits: a(1), b(2) and c(10-14). The alpha and beta chains form an alternating ring which encloses part of the gamma chain. F(1) is attached to F(0) by a central stalk formed by the gamma and epsilon chains, while a peripheral stalk is formed by the delta and b chains.

The protein resides in the cell inner membrane. Its function is as follows. F(1)F(0) ATP synthase produces ATP from ADP in the presence of a proton or sodium gradient. F-type ATPases consist of two structural domains, F(1) containing the extramembraneous catalytic core and F(0) containing the membrane proton channel, linked together by a central stalk and a peripheral stalk. During catalysis, ATP synthesis in the catalytic domain of F(1) is coupled via a rotary mechanism of the central stalk subunits to proton translocation. This protein is part of the stalk that links CF(0) to CF(1). It either transmits conformational changes from CF(0) to CF(1) or is implicated in proton conduction. The polypeptide is ATP synthase subunit delta (Laribacter hongkongensis (strain HLHK9)).